The chain runs to 215 residues: Small ribosomal subunit protein uS5 (215 aa).

Polar residues predominate over residues Met1–Asn11. The segment at Met1–Glu61 is disordered. The segment covering Ala12–Gln28 has biased composition (low complexity). The span at Arg39–Glu61 shows a compositional bias: basic and acidic residues. One can recognise an S5 DRBM domain in the interval Trp59–Val122.

This sequence belongs to the universal ribosomal protein uS5 family. As to quaternary structure, part of the 30S ribosomal subunit. Contacts proteins S4 and S8.

With S4 and S12 plays an important role in translational accuracy. Its function is as follows. Located at the back of the 30S subunit body where it stabilizes the conformation of the head with respect to the body. The protein is Small ribosomal subunit protein uS5 of Synechococcus sp. (strain CC9902).